Reading from the N-terminus, the 140-residue chain is Coiled-coil domain-containing protein 126 (140 aa).

Positions 1 to 35 (MFRTISRKNMSQKLSFLLLVFGLIWGLMLLHYTLQ) are cleaved as a signal peptide. Asparagine 110 is a glycosylation site (N-linked (GlcNAc...) asparagine). The span at 118–130 (NGTNGNLVPVTTN) shows a compositional bias: low complexity. The segment at 118 to 140 (NGTNGNLVPVTTNKRTSVSGSVR) is disordered. Residues 131-140 (KRTSVSGSVR) show a composition bias toward polar residues.

The protein resides in the secreted. In Mus musculus (Mouse), this protein is Coiled-coil domain-containing protein 126 (Ccdc126).